The chain runs to 252 residues: Diphthine synthase (252 aa).

Residues L9, D85, V88, 113–114 (SI), L165, A202, and H227 contribute to the S-adenosyl-L-methionine site.

Belongs to the diphthine synthase family. As to quaternary structure, homodimer.

It carries out the reaction 2-[(3S)-amino-3-carboxypropyl]-L-histidyl-[translation elongation factor 2] + 3 S-adenosyl-L-methionine = diphthine-[translation elongation factor 2] + 3 S-adenosyl-L-homocysteine + 3 H(+). It functions in the pathway protein modification; peptidyl-diphthamide biosynthesis. In terms of biological role, S-adenosyl-L-methionine-dependent methyltransferase that catalyzes the trimethylation of the amino group of the modified target histidine residue in translation elongation factor 2 (EF-2), to form an intermediate called diphthine. The three successive methylation reactions represent the second step of diphthamide biosynthesis. The chain is Diphthine synthase from Methanospirillum hungatei JF-1 (strain ATCC 27890 / DSM 864 / NBRC 100397 / JF-1).